The sequence spans 361 residues: Peptide chain release factor 1 (361 aa).

Position 233 is an N5-methylglutamine (Q233). The span at 280-293 (ERRKKEQERADSRR) shows a compositional bias: basic and acidic residues. Residues 280–307 (ERRKKEQERADSRRGQVGSGDRSERIRT) are disordered.

It belongs to the prokaryotic/mitochondrial release factor family. In terms of processing, methylated by PrmC. Methylation increases the termination efficiency of RF1.

Its subcellular location is the cytoplasm. Peptide chain release factor 1 directs the termination of translation in response to the peptide chain termination codons UAG and UAA. The polypeptide is Peptide chain release factor 1 (Rickettsia massiliae (strain Mtu5)).